The chain runs to 120 residues: Large ribosomal subunit protein uL22 (120 aa).

This sequence belongs to the universal ribosomal protein uL22 family. As to quaternary structure, part of the 50S ribosomal subunit.

In terms of biological role, this protein binds specifically to 23S rRNA; its binding is stimulated by other ribosomal proteins, e.g. L4, L17, and L20. It is important during the early stages of 50S assembly. It makes multiple contacts with different domains of the 23S rRNA in the assembled 50S subunit and ribosome. The globular domain of the protein is located near the polypeptide exit tunnel on the outside of the subunit, while an extended beta-hairpin is found that lines the wall of the exit tunnel in the center of the 70S ribosome. The sequence is that of Large ribosomal subunit protein uL22 from Acaryochloris marina (strain MBIC 11017).